A 2275-amino-acid chain; its full sequence is Multifunctional protein pyrABCN (2275 aa).

A GATase (Glutamine amidotransferase) region spans residues 1–440 (MPETVGHEEP…PGPRDTEYLF (440 aa)). L-glutamine-binding residues include S102, G313, and G315. The Glutamine amidotransferase type-1 domain maps to 265–453 (RVLCLDVGLK…INAIKDTIAS (189 aa)). C342 acts as the Nucleophile; for GATase activity in catalysis. The L-glutamine site is built by L343, Q346, N384, G386, and Y387. Residues H426 and E428 each act as for GATase activity in the active site. The linker stretch occupies residues 441-482 (DVFINAIKDTIASPEALQKPVNFPGGAVAENIKASPRVSVKK). The segment at 483–1522 (VLILGSGGLS…TNVKNAKILI (1040 aa)) is CPSase (Carbamoyl-phosphate synthase). Positions 600, 640, 646, 647, 677, 679, 684, 710, 711, 712, 753, and 767 each coordinate ATP. ATP-grasp domains follow at residues 604–796 (ARSM…KLGL) and 1139–1330 (SRML…KAMI). Residues Q753, E767, and N769 each contribute to the Mg(2+) site. 3 residues coordinate Mn(2+): Q753, E767, and N769. Positions 1175, 1214, 1216, 1221, 1246, 1247, 1248, 1249, 1289, and 1301 each coordinate ATP. Residues Q1289, E1301, and N1303 each coordinate Mg(2+). Residues Q1289, E1301, and N1303 each coordinate Mn(2+). Residues 1396-1575 (FKLPKRNILL…KDFEAVTKAS (180 aa)) form the MGS-like domain. Residues 1523-1532 (EAIARHYALN) form a linker region. A defective DHOase domain region spans residues 1533–1862 (VQTIDYQTSH…FQGKTSCLDS (330 aa)). The segment at 1863 to 1882 (EITPDAPKGSDMSGHRIVPA) is disordered. The linker stretch occupies residues 1863-1953 (EITPDAPKGS…LQMLSRSPFK (91 aa)). The ATCase (Aspartate transcarbamylase) stretch occupies residues 1954–2258 (QKHVLSVNQF…EFDMLMWMQM (305 aa)). The carbamoyl phosphate site is built by R2006 and T2007. L-aspartate is bound at residue K2034. The carbamoyl phosphate site is built by R2055, H2083, and Q2086. L-aspartate is bound by residues R2116 and R2178. 2 residues coordinate carbamoyl phosphate: L2217 and P2218.

This sequence in the central section; belongs to the metallo-dependent hydrolases superfamily. DHOase family. CAD subfamily. It in the N-terminal section; belongs to the CarA family. In the 2nd section; belongs to the CarB family. The protein in the 3rd section; belongs to the metallo-dependent hydrolases superfamily. DHOase family. CAD subfamily. This sequence in the C-terminal section; belongs to the aspartate/ornithine carbamoyltransferase superfamily. ATCase family. Mg(2+) is required as a cofactor. Mn(2+) serves as cofactor.

It carries out the reaction hydrogencarbonate + L-glutamine + 2 ATP + H2O = carbamoyl phosphate + L-glutamate + 2 ADP + phosphate + 2 H(+). It catalyses the reaction L-glutamine + H2O = L-glutamate + NH4(+). The catalysed reaction is hydrogencarbonate + NH4(+) + 2 ATP = carbamoyl phosphate + 2 ADP + phosphate + 2 H(+). The enzyme catalyses carbamoyl phosphate + L-aspartate = N-carbamoyl-L-aspartate + phosphate + H(+). It functions in the pathway pyrimidine metabolism; UMP biosynthesis via de novo pathway; (S)-dihydroorotate from bicarbonate: step 1/3. Its pathway is pyrimidine metabolism; UMP biosynthesis via de novo pathway; (S)-dihydroorotate from bicarbonate: step 2/3. Functionally, multifunctional protein that encodes the first 2 enzymatic activities of the de novo pyrimidine pathway: carbamoylphosphate synthetase (CPSase; EC 6.3.5.5) and aspartate transcarbamylase (ATCase; EC 2.1.3.2). The CPSase-function is accomplished in 2 steps, by a glutamine-dependent amidotransferase activity (GATase) that binds and cleaves glutamine to produce ammonia, followed by an ammonium-dependent carbamoyl phosphate synthetase, which reacts with the ammonia, hydrogencarbonate and ATP to form carbamoyl phosphate. The endogenously produced carbamoyl phosphate is sequestered and channeled to the ATCase active site. ATCase then catalyzes the formation of carbamoyl-L-aspartate from L-aspartate and carbamoyl phosphate. In Emericella nidulans (strain FGSC A4 / ATCC 38163 / CBS 112.46 / NRRL 194 / M139) (Aspergillus nidulans), this protein is Multifunctional protein pyrABCN.